We begin with the raw amino-acid sequence, 80 residues long: Putative DNA-directed RNA polymerase subunit omega (80 aa).

The protein belongs to the RNA polymerase subunit omega family.

It localises to the plastid. It is found in the chloroplast. The enzyme catalyses RNA(n) + a ribonucleoside 5'-triphosphate = RNA(n+1) + diphosphate. Its function is as follows. May be involved in RNA polymerase activity. The protein is Putative DNA-directed RNA polymerase subunit omega of Gracilaria tenuistipitata var. liui (Red alga).